The chain runs to 393 residues: 8-amino-7-oxononanoate synthase (393 aa).

A pyridoxal 5'-phosphate-binding site is contributed by 107–108 (GF). Histidine 132 lines the substrate pocket. Residues serine 180, 205 to 208 (DDAH), and 236 to 239 (TLSK) contribute to the pyridoxal 5'-phosphate site. An N6-(pyridoxal phosphate)lysine modification is found at lysine 239. Threonine 353 lines the substrate pocket.

The protein belongs to the class-II pyridoxal-phosphate-dependent aminotransferase family. BioF subfamily. As to quaternary structure, homodimer. Pyridoxal 5'-phosphate is required as a cofactor.

It catalyses the reaction 6-carboxyhexanoyl-[ACP] + L-alanine + H(+) = (8S)-8-amino-7-oxononanoate + holo-[ACP] + CO2. It functions in the pathway cofactor biosynthesis; biotin biosynthesis. Functionally, catalyzes the decarboxylative condensation of pimeloyl-[acyl-carrier protein] and L-alanine to produce 8-amino-7-oxononanoate (AON), [acyl-carrier protein], and carbon dioxide. The protein is 8-amino-7-oxononanoate synthase of Coprothermobacter proteolyticus (strain ATCC 35245 / DSM 5265 / OCM 4 / BT).